Reading from the N-terminus, the 397-residue chain is 3-hydroxybenzoate 6-hydroxylase (397 aa).

Belongs to the 3-hydroxybenzoate 6-hydroxylase family. Monomer. The cofactor is FAD.

It carries out the reaction 3-hydroxybenzoate + NADH + O2 + H(+) = 2,5-dihydroxybenzoate + NAD(+) + H2O. With respect to regulation, inhibited by copper, mercury and iron ions. In terms of biological role, catalyzes the NAD- or NADP-dependent conversion of 3-hydroxybenzoate to gentisate. NAD and NADP function equally well. The protein is 3-hydroxybenzoate 6-hydroxylase (mhbM) of Klebsiella oxytoca.